Here is a 362-residue protein sequence, read N- to C-terminus: 3-isopropylmalate dehydrogenase (362 aa).

78 to 91 (GPQWDTLPSDKRPE) provides a ligand contact to NAD(+). Substrate contacts are provided by R98, R108, R136, and D226. Mg(2+) contacts are provided by D226, D250, and D254. An NAD(+)-binding site is contributed by 284 to 296 (GSAPDIAGQDKAN).

This sequence belongs to the isocitrate and isopropylmalate dehydrogenases family. LeuB type 1 subfamily. Homodimer. It depends on Mg(2+) as a cofactor. The cofactor is Mn(2+).

The protein resides in the cytoplasm. It carries out the reaction (2R,3S)-3-isopropylmalate + NAD(+) = 4-methyl-2-oxopentanoate + CO2 + NADH. It functions in the pathway amino-acid biosynthesis; L-leucine biosynthesis; L-leucine from 3-methyl-2-oxobutanoate: step 3/4. Functionally, catalyzes the oxidation of 3-carboxy-2-hydroxy-4-methylpentanoate (3-isopropylmalate) to 3-carboxy-4-methyl-2-oxopentanoate. The product decarboxylates to 4-methyl-2 oxopentanoate. In Gloeobacter violaceus (strain ATCC 29082 / PCC 7421), this protein is 3-isopropylmalate dehydrogenase.